Here is a 187-residue protein sequence, read N- to C-terminus: Translation initiation factor IF-3 (187 aa).

The protein belongs to the IF-3 family. As to quaternary structure, monomer.

It is found in the cytoplasm. In terms of biological role, IF-3 binds to the 30S ribosomal subunit and shifts the equilibrium between 70S ribosomes and their 50S and 30S subunits in favor of the free subunits, thus enhancing the availability of 30S subunits on which protein synthesis initiation begins. In Leptospira biflexa serovar Patoc (strain Patoc 1 / Ames), this protein is Translation initiation factor IF-3.